Here is a 392-residue protein sequence, read N- to C-terminus: MTLLNSYFGDFGGMYVPQILMPALYQLEEEFIFSLKSSKFKIELSNLLENYAGRPTPLTLCRNLTKGTKTKIYLKREDLLHGGAHKTNQVLGQALLAKKMKKKEIIAETGAGQHGVAAAFSCALLNLKCRIYMGLKDINRQQQNVFRMKLMGAEVIPVKTGSGTLKDACNEALRDWSENYINAHYMLGTAAGPHPYPTIVKEFQSIIGKETKRQIVREENCLPNAVIACVGGGSNAIGIFSSFISDNSVSLIGVEPGGKGIHTNKHGAPLTHGETGIFFGMKTKIMQTEEGQIKESWSISAGLDFPAVGPEHAWLYSTKRAQYVSITDHEAVNAFRCLSKSEGIIPALESSHALAYALKLMNNHPQKNQILIVNISGRGDKDIETVKNFLKM.

Residue K86 is modified to N6-(pyridoxal phosphate)lysine.

This sequence belongs to the TrpB family. As to quaternary structure, tetramer of two alpha and two beta chains. Pyridoxal 5'-phosphate is required as a cofactor.

It catalyses the reaction (1S,2R)-1-C-(indol-3-yl)glycerol 3-phosphate + L-serine = D-glyceraldehyde 3-phosphate + L-tryptophan + H2O. It participates in amino-acid biosynthesis; L-tryptophan biosynthesis; L-tryptophan from chorismate: step 5/5. In terms of biological role, the beta subunit is responsible for the synthesis of L-tryptophan from indole and L-serine. The chain is Tryptophan synthase beta chain (trpB) from Buchnera aphidicola subsp. Melaphis rhois.